Reading from the N-terminus, the 239-residue chain is Small ribosomal subunit protein uS3 (239 aa).

One can recognise a KH type-2 domain in the interval 39–109; the sequence is IRAMIQEIPE…KVQIKIKEVK (71 aa). A disordered region spans residues 219 to 239; that stretch reads GALLKKQRRPRTEKPAQAGRQ.

This sequence belongs to the universal ribosomal protein uS3 family. Part of the 30S ribosomal subunit. Forms a tight complex with proteins S10 and S14.

In terms of biological role, binds the lower part of the 30S subunit head. Binds mRNA in the 70S ribosome, positioning it for translation. The polypeptide is Small ribosomal subunit protein uS3 (Treponema denticola (strain ATCC 35405 / DSM 14222 / CIP 103919 / JCM 8153 / KCTC 15104)).